Here is a 145-residue protein sequence, read N- to C-terminus: Large ribosomal subunit protein uL16 (145 aa).

Belongs to the universal ribosomal protein uL16 family. As to quaternary structure, part of the 50S ribosomal subunit.

Binds 23S rRNA and is also seen to make contacts with the A and possibly P site tRNAs. The sequence is that of Large ribosomal subunit protein uL16 from Lactobacillus johnsonii (strain CNCM I-12250 / La1 / NCC 533).